The primary structure comprises 620 residues: Glutathione-regulated potassium-efflux system protein KefC (620 aa).

The next 12 helical transmembrane spans lie at 4–24, 26–46, 54–74, 90–110, 114–134, 149–169, 178–198, 218–238, 270–290, 294–314, 327–347, and 359–379; these read HTLL…PIAV, LGLG…PWGL, SILH…GLEL, GALQ…FLGL, VAEL…MQAM, FAVL…IPLL, LGAF…VVLL, VFSA…EEVG, GLLL…GTLV, LRIL…LWLV, WFAV…GAAQ, and ALTL…VLLT. The RCK N-terminal domain occupies 399 to 518; it reads QPRVIVAGFG…AGVAMPERET (120 aa). Positions 599-620 are disordered; the sequence is QGTAEGKHSGEAADEPEVKPSI.

This sequence belongs to the monovalent cation:proton antiporter 2 (CPA2) transporter (TC 2.A.37) family. KefC subfamily. In terms of assembly, homodimer. Interacts with the regulatory subunit KefF.

The protein localises to the cell inner membrane. Pore-forming subunit of a potassium efflux system that confers protection against electrophiles. Catalyzes K(+)/H(+) antiport. The protein is Glutathione-regulated potassium-efflux system protein KefC of Salmonella choleraesuis (strain SC-B67).